A 30-amino-acid chain; its full sequence is U1-poneritoxin-Ni3a (30 aa).

Belongs to the ponericin-G family. Expressed by the venom gland.

Its subcellular location is the secreted. Shows a broad spectrum of activity against both Gram-positive and Gram-negative bacteria. Also has antimicrobial activity against S.cerevisiae. Has insecticidal and non-hemolytic activity. This chain is U1-poneritoxin-Ni3a, found in Neoponera inversa (Ant).